The chain runs to 120 residues: Urease subunit beta (120 aa).

This sequence belongs to the urease beta subunit family. As to quaternary structure, heterotrimer of UreA (gamma), UreB (beta) and UreC (alpha) subunits. Three heterotrimers associate to form the active enzyme.

The protein resides in the cytoplasm. The enzyme catalyses urea + 2 H2O + H(+) = hydrogencarbonate + 2 NH4(+). Its pathway is nitrogen metabolism; urea degradation; CO(2) and NH(3) from urea (urease route): step 1/1. The polypeptide is Urease subunit beta (Corynebacterium efficiens (strain DSM 44549 / YS-314 / AJ 12310 / JCM 11189 / NBRC 100395)).